Here is a 403-residue protein sequence, read N- to C-terminus: Probable eukaryotic initiation factor 4A (403 aa).

Residues 1–29 (MAQNDKIAPQDQDSFLDDQPGVRPIPSFD) are disordered. Residues 26-54 (PSFDDMPLHQNLLRGIYSYGFEKPSSIQQ) carry the Q motif motif. The region spanning 57 to 230 (IAPFTRGGDI…KKFMRDPVRI (174 aa)) is the Helicase ATP-binding domain. Residue 70–77 (AQSGTGKT) participates in ATP binding. The DEAD box signature appears at 178–181 (DEAD). The region spanning 241–401 (GIKQFFIAVE…ELPVDFAAYL (161 aa)) is the Helicase C-terminal domain.

Belongs to the DEAD box helicase family. eIF4A subfamily. As to quaternary structure, eIF4F is a multi-subunit complex, the composition of which varies with external and internal environmental conditions. It is composed of at least EIF4A, EIF4E and EIF4G.

The enzyme catalyses ATP + H2O = ADP + phosphate + H(+). Its function is as follows. ATP-dependent RNA helicase which is a subunit of the eIF4F complex involved in cap recognition and is required for mRNA binding to ribosome. In the current model of translation initiation, eIF4A unwinds RNA secondary structures in the 5'-UTR of mRNAs which is necessary to allow efficient binding of the small ribosomal subunit, and subsequent scanning for the initiator codon. The protein is Probable eukaryotic initiation factor 4A of Leishmania infantum.